The following is a 139-amino-acid chain: UDP-glucose 4-epimerase (139 aa).

Residues 11–12 (YI), 31–36 (DNLCNS), 58–59 (DI), 80–84 (FAGLK), Asn-99, and Ser-124 contribute to the NAD(+) site. Ser-124 lines the substrate pocket. Tyr-136 (proton acceptor) is an active-site residue.

This sequence belongs to the NAD(P)-dependent epimerase/dehydratase family. Homodimer. It depends on NAD(+) as a cofactor.

The enzyme catalyses UDP-alpha-D-glucose = UDP-alpha-D-galactose. The protein operates within carbohydrate metabolism; galactose metabolism. Its function is as follows. Involved in the metabolism of galactose. Catalyzes the conversion of UDP-galactose (UDP-Gal) to UDP-glucose (UDP-Glc) through a mechanism involving the transient reduction of NAD. The sequence is that of UDP-glucose 4-epimerase (galE) from Klebsiella pneumoniae.